The primary structure comprises 255 residues: 5-oxoprolinase subunit A (255 aa).

It belongs to the LamB/PxpA family. In terms of assembly, forms a complex composed of PxpA, PxpB and PxpC.

The catalysed reaction is 5-oxo-L-proline + ATP + 2 H2O = L-glutamate + ADP + phosphate + H(+). In terms of biological role, catalyzes the cleavage of 5-oxoproline to form L-glutamate coupled to the hydrolysis of ATP to ADP and inorganic phosphate. The sequence is that of 5-oxoprolinase subunit A from Pyrococcus furiosus (strain ATCC 43587 / DSM 3638 / JCM 8422 / Vc1).